Reading from the N-terminus, the 486-residue chain is NADH-quinone oxidoreductase subunit N 1 (486 aa).

14 consecutive transmembrane segments (helical) span residues F15 to I35, I46 to G66, M72 to L92, Y111 to S128, L131 to Y151, F166 to L186, F208 to P228, P241 to L261, Q276 to L296, M303 to S323, M331 to L351, A375 to F395, I410 to V432, and F455 to L475.

The protein belongs to the complex I subunit 2 family. In terms of assembly, NDH-1 is composed of 14 different subunits. Subunits NuoA, H, J, K, L, M, N constitute the membrane sector of the complex.

Its subcellular location is the cell inner membrane. It carries out the reaction a quinone + NADH + 5 H(+)(in) = a quinol + NAD(+) + 4 H(+)(out). Functionally, NDH-1 shuttles electrons from NADH, via FMN and iron-sulfur (Fe-S) centers, to quinones in the respiratory chain. The immediate electron acceptor for the enzyme in this species is believed to be ubiquinone. Couples the redox reaction to proton translocation (for every two electrons transferred, four hydrogen ions are translocated across the cytoplasmic membrane), and thus conserves the redox energy in a proton gradient. In Solibacter usitatus (strain Ellin6076), this protein is NADH-quinone oxidoreductase subunit N 1.